The following is a 305-amino-acid chain: Translation initiation factor eIF2B subunit alpha (305 aa).

Belongs to the eIF-2B alpha/beta/delta subunits family. Component of the translation initiation factor 2B (eIF2B) complex which is a heterodecamer of two sets of five different subunits: alpha, beta, gamma, delta and epsilon. Subunits alpha, beta and delta comprise a regulatory subcomplex and subunits epsilon and gamma comprise a catalytic subcomplex. Within the complex, the hexameric regulatory complex resides at the center, with the two heterodimeric catalytic subcomplexes bound on opposite sides.

The protein localises to the cytoplasm. Its subcellular location is the cytosol. Functionally, acts as a component of the translation initiation factor 2B (eIF2B) complex, which catalyzes the exchange of GDP for GTP on eukaryotic initiation factor 2 (eIF2) gamma subunit. Its guanine nucleotide exchange factor activity is repressed when bound to eIF2 complex phosphorylated on the alpha subunit, thereby limiting the amount of methionyl-initiator methionine tRNA available to the ribosome and consequently global translation is repressed. This is Translation initiation factor eIF2B subunit alpha from Caenorhabditis elegans.